A 334-amino-acid polypeptide reads, in one-letter code: Protein-methionine-sulfoxide reductase catalytic subunit MsrP (334 aa).

Residues 1–44 (MKKIRPLTEADVTAESAFFMQRRQVLKALGISAAALSLPSTAQA) constitute a signal peptide (tat-type signal). Mo-molybdopterin contacts are provided by residues asparagine 88, 91 to 92 (YE), cysteine 146, threonine 181, asparagine 233, arginine 238, and 249 to 251 (GIK).

This sequence belongs to the MsrP family. In terms of assembly, heterodimer of a catalytic subunit (MsrP) and a heme-binding subunit (MsrQ). The cofactor is Mo-molybdopterin. Post-translationally, predicted to be exported by the Tat system. The position of the signal peptide cleavage has not been experimentally proven.

It localises to the periplasm. The enzyme catalyses L-methionyl-[protein] + a quinone + H2O = L-methionyl-(S)-S-oxide-[protein] + a quinol. The catalysed reaction is L-methionyl-[protein] + a quinone + H2O = L-methionyl-(R)-S-oxide-[protein] + a quinol. Functionally, part of the MsrPQ system that repairs oxidized periplasmic proteins containing methionine sulfoxide residues (Met-O), using respiratory chain electrons. Thus protects these proteins from oxidative-stress damage caused by reactive species of oxygen and chlorine generated by the host defense mechanisms. MsrPQ is essential for the maintenance of envelope integrity under bleach stress, rescuing a wide series of structurally unrelated periplasmic proteins from methionine oxidation, including the primary periplasmic chaperone SurA and the lipoprotein Pal. The catalytic subunit MsrP is non-stereospecific, being able to reduce both (R-) and (S-) diastereoisomers of methionine sulfoxide. The protein is Protein-methionine-sulfoxide reductase catalytic subunit MsrP of Salmonella dublin (strain CT_02021853).